The primary structure comprises 312 residues: uncharacterized protein (312 aa).

The next 6 membrane-spanning stretches (helical) occupy residues 9–29, 115–135, 187–207, 224–244, 264–284, and 292–312; these read LTLT…GLFI, LATL…IGFI, ITIA…DYIT, ITVA…AGEF, ILSS…IYGF, and MIST…TLIL.

The protein localises to the cell membrane. This is an uncharacterized protein from Methanocaldococcus jannaschii (strain ATCC 43067 / DSM 2661 / JAL-1 / JCM 10045 / NBRC 100440) (Methanococcus jannaschii).